Reading from the N-terminus, the 276-residue chain is Ribosomal RNA small subunit methyltransferase A (276 aa).

Positions 27, 29, 54, 75, 101, and 122 each coordinate S-adenosyl-L-methionine.

The protein belongs to the class I-like SAM-binding methyltransferase superfamily. rRNA adenine N(6)-methyltransferase family. RsmA subfamily.

It is found in the cytoplasm. It carries out the reaction adenosine(1518)/adenosine(1519) in 16S rRNA + 4 S-adenosyl-L-methionine = N(6)-dimethyladenosine(1518)/N(6)-dimethyladenosine(1519) in 16S rRNA + 4 S-adenosyl-L-homocysteine + 4 H(+). Specifically dimethylates two adjacent adenosines (A1518 and A1519) in the loop of a conserved hairpin near the 3'-end of 16S rRNA in the 30S particle. May play a critical role in biogenesis of 30S subunits. The sequence is that of Ribosomal RNA small subunit methyltransferase A from Brucella abortus (strain S19).